Consider the following 110-residue polypeptide: Large ribosomal subunit protein uL24 (110 aa).

It belongs to the universal ribosomal protein uL24 family. In terms of assembly, part of the 50S ribosomal subunit.

One of two assembly initiator proteins, it binds directly to the 5'-end of the 23S rRNA, where it nucleates assembly of the 50S subunit. In terms of biological role, one of the proteins that surrounds the polypeptide exit tunnel on the outside of the subunit. The polypeptide is Large ribosomal subunit protein uL24 (Frankia alni (strain DSM 45986 / CECT 9034 / ACN14a)).